We begin with the raw amino-acid sequence, 838 residues long: Periplasmic nitrate reductase (838 aa).

Positions Met1–Ala29 form a signal peptide, tat-type signal. Residues Leu41–Asp97 enclose the 4Fe-4S Mo/W bis-MGD-type domain. The [4Fe-4S] cluster site is built by Cys48, Cys51, Cys55, and Cys83. Mo-bis(molybdopterin guanine dinucleotide) is bound by residues Lys85, Gln152, Asn177, Cys181, Trp214–Met221, Ser245–His249, Met382, Gln386, Asn492, Ser518–Asp519, Lys541, Asp568, and Thr728–Ser737. Trp804 contacts substrate. Mo-bis(molybdopterin guanine dinucleotide) is bound by residues Asn812 and Lys829.

The protein belongs to the prokaryotic molybdopterin-containing oxidoreductase family. NasA/NapA/NarB subfamily. In terms of assembly, component of the periplasmic nitrate reductase NapAB complex composed of NapA and NapB. [4Fe-4S] cluster is required as a cofactor. Mo-bis(molybdopterin guanine dinucleotide) serves as cofactor. Post-translationally, predicted to be exported by the Tat system. The position of the signal peptide cleavage has not been experimentally proven.

Its subcellular location is the periplasm. It catalyses the reaction 2 Fe(II)-[cytochrome] + nitrate + 2 H(+) = 2 Fe(III)-[cytochrome] + nitrite + H2O. Its function is as follows. Catalytic subunit of the periplasmic nitrate reductase complex NapAB. Receives electrons from NapB and catalyzes the reduction of nitrate to nitrite. The protein is Periplasmic nitrate reductase of Ralstonia pickettii (strain 12J).